Consider the following 465-residue polypeptide: Adenosine 3'-phospho 5'-phosphosulfate transporter 1 (465 aa).

Helical transmembrane passes span 13–33 (LVICSFIVVTLLVIHFFSDLL), 61–81 (FLKLLVNCFGYSCVFVPGFLI), 142–162 (AVQLLWCFGGLMISYLTWGVL), 185–205 (QFLVFSNRLLAFLVALAYLQW), 270–290 (SYEYVTALLISLGMIFFMSGS), 299–319 (VTTLTGIFLLSMYMVFDSFTA), 339–359 (GVNLFSSIFTGASLSMQGGFM), 370–390 (KFVFDMVVLSVCSAVGQLFIY), 391–407 (HTIDVFGPVVFTIIMTL), and 424–444 (ISLLGIFGVLIVFVAIFLRVY).

It belongs to the nucleotide-sugar transporter family. SLC35B subfamily. As to expression, expressed throughout embryogenesis. During oogenesis, it is expressed strongly in the nurse cells of the germline. Maternally expressed at the syncytial blastoderm stage. Zygotically expressed, from after germ-band elongation in the invaginating salivary gland placodes. Remains expressed predominantly in this tissue throughout embryogenesis, but low-level expression may also be present throughout the embryo.

The protein localises to the golgi apparatus membrane. Functionally, mediates the transport of adenosine 3'-phospho 5'-phosphosulfate (PAPS), from cytosol into Golgi. PAPS is a universal sulfuryl donor for sulfation events that take place in the Golgi. Required for the dorsoventral patterning, suggesting that it mediates the transport of the sulfate donor required for the sulfotransferase activity of pip (pipe). This is Adenosine 3'-phospho 5'-phosphosulfate transporter 1 (sll) from Drosophila melanogaster (Fruit fly).